The chain runs to 219 residues: Endonuclease III (219 aa).

Residues 117 to 136 (MEELLTLPGVARKTANVVLA) enclose the HhH domain. Residues Cys197, Cys204, Cys207, and Cys213 each coordinate [4Fe-4S] cluster.

It belongs to the Nth/MutY family. [4Fe-4S] cluster serves as cofactor.

It catalyses the reaction 2'-deoxyribonucleotide-(2'-deoxyribose 5'-phosphate)-2'-deoxyribonucleotide-DNA = a 3'-end 2'-deoxyribonucleotide-(2,3-dehydro-2,3-deoxyribose 5'-phosphate)-DNA + a 5'-end 5'-phospho-2'-deoxyribonucleoside-DNA + H(+). DNA repair enzyme that has both DNA N-glycosylase activity and AP-lyase activity. The DNA N-glycosylase activity releases various damaged pyrimidines from DNA by cleaving the N-glycosidic bond, leaving an AP (apurinic/apyrimidinic) site. The AP-lyase activity cleaves the phosphodiester bond 3' to the AP site by a beta-elimination, leaving a 3'-terminal unsaturated sugar and a product with a terminal 5'-phosphate. The protein is Endonuclease III of Synechocystis sp. (strain ATCC 27184 / PCC 6803 / Kazusa).